A 141-amino-acid polypeptide reads, in one-letter code: Large ribosomal subunit protein uL11 (141 aa).

Belongs to the universal ribosomal protein uL11 family. In terms of assembly, part of the ribosomal stalk of the 50S ribosomal subunit. Interacts with L10 and the large rRNA to form the base of the stalk. L10 forms an elongated spine to which L12 dimers bind in a sequential fashion forming a multimeric L10(L12)X complex. Post-translationally, one or more lysine residues are methylated.

Its function is as follows. Forms part of the ribosomal stalk which helps the ribosome interact with GTP-bound translation factors. The chain is Large ribosomal subunit protein uL11 from Clostridium tetani (strain Massachusetts / E88).